The following is a 95-amino-acid chain: Integration host factor subunit beta (95 aa).

It belongs to the bacterial histone-like protein family. In terms of assembly, heterodimer of an alpha and a beta chain.

Functionally, this protein is one of the two subunits of integration host factor, a specific DNA-binding protein that functions in genetic recombination as well as in transcriptional and translational control. This Klebsiella pneumoniae (strain 342) protein is Integration host factor subunit beta.